Here is an 830-residue protein sequence, read N- to C-terminus: Outer dense fiber protein 2 (830 aa).

A phosphoserine mark is found at Ser-73 and Ser-74. Thr-92 carries the phosphothreonine modification. Residue Ser-95 is modified to Phosphoserine; by TSSK4. 2 positions are modified to phosphoserine: Ser-106 and Ser-109. Thr-110 carries the phosphothreonine modification. A phosphoserine mark is found at Ser-115 and Ser-129. Residue Lys-138 forms a Glycyl lysine isopeptide (Lys-Gly) (interchain with G-Cter in SUMO2) linkage. Ser-139 carries the post-translational modification Phosphoserine. Residues 144–217 (QKGERQMAKR…MSKLVEAEMD (74 aa)) adopt a coiled-coil conformation. Thr-231 carries the post-translational modification Phosphothreonine. 2 coiled-coil regions span residues 245 to 423 (DINT…AEQL) and 461 to 798 (EIIV…NYVQ). Phosphoserine occurs at positions 261 and 632. Residues 537–701 (KNYEGMIDNY…EAIHQAQLRL (165 aa)) form an interaction with BBOF1 region.

Belongs to the ODF2 family. Self-associates. Associates with microtubules and forms a fibrillar structure partially linked to the microtubule network. Interacts via its C-terminus with PLK1. Interacts with ODF1. Interacts with MARK4; the interaction is required for localization of ODF2 to centrioles. Interacts with TSSK4. Interacts with AKNA. Interacts with CFAP58. Interacts with BBOF1. Interacts with CCDC38. Interacts with CCDC42. Post-translationally, tyrosine phosphorylated. Phosphorylated on Ser-95 by TSSK4. As to expression, testis-specific (at protein level). Expressed in spermatids at tubular stage V of the spermatogenic cycle. Highly expressed in the cytoplasm of elongating spermatids (tubular stages X/XI). In step 14/15 spermatids of tubular stage III/IV low expression detected. No expression detected in other testicular cells as well as the early round of spermatids.

Its subcellular location is the cytoplasm. It localises to the cytoskeleton. The protein resides in the microtubule organizing center. The protein localises to the centrosome. It is found in the cell projection. Its subcellular location is the cilium. It localises to the centriole. The protein resides in the spindle pole. The protein localises to the flagellum. Functionally, seems to be a major component of sperm tail outer dense fibers (ODF). ODFs are filamentous structures located on the outside of the axoneme in the midpiece and principal piece of the mammalian sperm tail and may help to maintain the passive elastic structures and elastic recoil of the sperm tail. May have a modulating influence on sperm motility. Functions as a general scaffold protein that is specifically localized at the distal/subdistal appendages of mother centrioles. Component of the centrosome matrix required for the localization of PLK1 and NIN to the centrosomes. Required for the formation and/or maintenance of normal CETN1 assembly. In Mus musculus (Mouse), this protein is Outer dense fiber protein 2 (Odf2).